The chain runs to 393 residues: MKRPVTGKDLMIVNMGPHHPSMHGVLRLIVTLDGEDVVDCEPILGYLHRGMEKIAENRAIIQYLPYVTRWDYLATMFTEAITVNGPEQLGNIQVPKRASYIRVIMLELSRIASHLLWLGPFMADIGAQTPFFYIFREREFVYDLFEAATGMRMMHNFFRIGGIAADLPYGWIDKCLDFCDYFLTEVVEYQKLITRNPIFLERVEGVGIIGGEEAINWGLSGPMLRASGIPWDLRKVDRYESYDEFEWDIQWQKQGDSLARYLVRLNEMTESIKIIQQALEGLPGGPYENLESRGFDRKRNPEWNDFEYRFISKKPSPTFELSKQELYVRVEAPKGELGIFLIGDQSGFPWRWKIRPPGFINLQILPELVKRMKLADIMTILGSIDIIMGEVDR.

Belongs to the complex I 49 kDa subunit family. As to quaternary structure, NDH is composed of at least 16 different subunits, 5 of which are encoded in the nucleus.

It is found in the plastid. The protein resides in the chloroplast thylakoid membrane. The catalysed reaction is a plastoquinone + NADH + (n+1) H(+)(in) = a plastoquinol + NAD(+) + n H(+)(out). It carries out the reaction a plastoquinone + NADPH + (n+1) H(+)(in) = a plastoquinol + NADP(+) + n H(+)(out). Its function is as follows. NDH shuttles electrons from NAD(P)H:plastoquinone, via FMN and iron-sulfur (Fe-S) centers, to quinones in the photosynthetic chain and possibly in a chloroplast respiratory chain. The immediate electron acceptor for the enzyme in this species is believed to be plastoquinone. Couples the redox reaction to proton translocation, and thus conserves the redox energy in a proton gradient. In Olimarabidopsis pumila (Dwarf rocket), this protein is NAD(P)H-quinone oxidoreductase subunit H, chloroplastic.